Here is a 184-residue protein sequence, read N- to C-terminus: Large ribosomal subunit protein uL5 (184 aa).

Belongs to the universal ribosomal protein uL5 family. In terms of assembly, part of the 50S ribosomal subunit; part of the 5S rRNA/L5/L18/L25 subcomplex. Contacts the 5S rRNA and the P site tRNA. Forms a bridge to the 30S subunit in the 70S ribosome.

In terms of biological role, this is one of the proteins that bind and probably mediate the attachment of the 5S RNA into the large ribosomal subunit, where it forms part of the central protuberance. In the 70S ribosome it contacts protein S13 of the 30S subunit (bridge B1b), connecting the 2 subunits; this bridge is implicated in subunit movement. Contacts the P site tRNA; the 5S rRNA and some of its associated proteins might help stabilize positioning of ribosome-bound tRNAs. In Syntrophotalea carbinolica (strain DSM 2380 / NBRC 103641 / GraBd1) (Pelobacter carbinolicus), this protein is Large ribosomal subunit protein uL5.